We begin with the raw amino-acid sequence, 656 residues long: tRNA 5-methylaminomethyl-2-thiouridine biosynthesis bifunctional protein MnmC (656 aa).

Residues 1-236 (MTDPLIPAVL…KRAMLVGRFA (236 aa)) are tRNA (mnm(5)s(2)U34)-methyltransferase. Residues 260-656 (IGTGLAGCAV…LRALRQGTVS (397 aa)) are FAD-dependent cmnm(5)s(2)U34 oxidoreductase.

This sequence in the N-terminal section; belongs to the methyltransferase superfamily. tRNA (mnm(5)s(2)U34)-methyltransferase family. It in the C-terminal section; belongs to the DAO family. FAD is required as a cofactor.

It localises to the cytoplasm. The enzyme catalyses 5-aminomethyl-2-thiouridine(34) in tRNA + S-adenosyl-L-methionine = 5-methylaminomethyl-2-thiouridine(34) in tRNA + S-adenosyl-L-homocysteine + H(+). Catalyzes the last two steps in the biosynthesis of 5-methylaminomethyl-2-thiouridine (mnm(5)s(2)U) at the wobble position (U34) in tRNA. Catalyzes the FAD-dependent demodification of cmnm(5)s(2)U34 to nm(5)s(2)U34, followed by the transfer of a methyl group from S-adenosyl-L-methionine to nm(5)s(2)U34, to form mnm(5)s(2)U34. This is tRNA 5-methylaminomethyl-2-thiouridine biosynthesis bifunctional protein MnmC from Paraburkholderia xenovorans (strain LB400).